Here is a 1252-residue protein sequence, read N- to C-terminus: Putative late blight resistance protein homolog R1B-11 (1252 aa).

Positions 543–566 (RYSDSLAFLKNQLQVIQTEFESLQ) form a coiled coil. 2 NB-ARC domains span residues 684–736 (SVRR…RSRI) and 786–830 (SYHV…SSEG). LRR repeat units follow at residues 955–980 (FKFL…PYLR), 998–1026 (LWNL…VWDM), 1077–1100 (LKHL…KVSS), 1103–1125 (FPKL…ADDA), 1126–1149 (FPNL…CFTD), 1187–1212 (LVII…RLSS), and 1213–1236 (LPGI…DVDA). The region spanning 1188–1252 (VIIKKLVLKF…VGKLNKRDML (65 aa)) is the HMA domain.

Belongs to the disease resistance NB-LRR family.

The protein resides in the cytoplasm. Its subcellular location is the membrane. In terms of biological role, confers resistance to late blight (Phytophthora infestans) races carrying the avirulence gene Avr1. Resistance proteins guard the plant against pathogens that contain an appropriate avirulence protein via an indirect interaction with this avirulence protein. That triggers a defense system including the hypersensitive response, which restricts the pathogen growth. This Solanum demissum (Wild potato) protein is Putative late blight resistance protein homolog R1B-11 (R1B-11).